The sequence spans 236 residues: Outer membrane protein P.III (236 aa).

The first 22 residues, 1–22 (MTKQLKLSALFVALLASGTAVA), serve as a signal peptide directing secretion. A run of 4 repeats spans residues 69-70 (VP), 71-72 (EP), 73-74 (EP), and 75-76 (AP). Positions 69–76 (VPEPEPAP) are 4 X 2 AA tandem repeats of X-P. An OmpA-like domain is found at 86–223 (YVDETISLSA…RVDVKIRSIV (138 aa)). A disulfide bridge connects residues Cys-185 and Cys-208.

The protein belongs to the outer membrane OOP (TC 1.B.6) superfamily.

The protein resides in the cell outer membrane. This Neisseria gonorrhoeae protein is Outer membrane protein P.III.